We begin with the raw amino-acid sequence, 1512 residues long: MSSLLNSLLPEYFKPKTNLNINSSRVQYGFNARIDMQYEDDSGTRKGSRPNAFMSNTVAFIGNYEGIIVDDIPILDGLRADIFDTHGDLDMGLVEDALSKSTMIRRNVPTYTAYASELLYKRNLTSLFYNMLRLYYIKKWGSIKYEKDAIFYDNGHACLLNRQLFPKSRDASLESSLSLPEAEIAMLDPGLEFPEEDVPAILWHGRVSSRATCILGQACSEFAPLAPFSIAHYSPQLTRKLFVNAPAGIEPSSGRYTHEDVKDAITILVSANQAYTDFEAAYLMLAQTLVSPVPRTAEASAWFINAGMVNMPTLSCANGYYPALTNVNPYHRLDTWKDTLNHWVAYPDMLFYHSVAMIESCYVELGNVARVSDSDAINKYTFTELSVQGRPVMNRGIIVDLTLVAMRTGREISLPYPVSCGLTRTDALLQGTEIHVPVVVKDIDMPQYYNAIDKDVIEGQETVIKVKQLPPAMYPIYTYGINTTEFYSDHFEDQVQVEMAPIDNGKAVFNDARKFSKFMSIMRMMGNDVTATDLVTGRKVSNWADNSSGRFLYTDVKYEGQTAFLVDMDTVKARDHCWVSIVDPNGTMNLSYKMTNFRAAMFSRNKPLYMTGGSVRTIATGNYRDAAERLRAMDETLRLKPFKITEKLDFSCSSLRDTKFVGQQYAILTPSGTTTDIRSGRGTNQSYRRGRTSTGYRIGVEDDEDLDIGTVKYIVPLYLNGDNVAQNCLEATHVLIKACSIANRIVDDGEGHCFTQQGLAQQWIFHRGEMIFVKAVRIGQLNAYYVDYKNVTNYSLKTAAQVGATISNNLRHGFVDNQQDAYTRLVANYSDTRKWIRDNFTYNYNMEKEKYRITQYHHTHVRLKDLFPSRKIVKLEGYEALLAMMLDRFNNIESTHVTFFTYLRALPDREKEVFISLVLNYNGLGREWLKSEGVRAKQAQGTVKYDMSKLFELNVLENGVDEEVDWEKEKRNRSDIKTVNISYAKVLEHCRELFIMARAEGKRPMRMKWQEYWRQRAVIMPGGSVHSQHPVEQDVIRVLPREIRSKKGVASVMPYKEQKYFTSRRPEIHAYTSTKYEWGKVRALYGCDFSSHTMADFGLLQCEDTFPGFVPTGSYANEDYVRTRIAGTHSLIPFCYDFDDFNSQHSKEAMQAVIDAWISVYHDKLTDDQIEAAKWTRNSVDRMVAHQPNTGETYDVKGTLFSGWRLTTFFNTALNYCYLANAGINSLVPTSLHNGDDVFAGIRTIADGISLIKNAAATGVRANTTKMNIGTIAEFLRVDMRAKNSTGSQYLTRGIATFTHSRVESDAPLTLRNLVSAYKTRYDEILARGASIDNMKPLYRKQLFFARKLFNVEKDIVDNLITMDISCGGLQEKGRVSEMVLQEVDIENIDSYRKTRMIAKLIDKGVGDYTAFLKTNFSEIADAITRETRVESVTKAYNVKKKTVVRAFRDLSAAYHERAVRHAWKGMSGLHIVNRIRMGVSNLVMVVSKINPAKANVLAKSGDPTKWLAVLT.

Belongs to the totiviridae RNA-directed RNA polymerase family.

It catalyses the reaction RNA(n) + a ribonucleoside 5'-triphosphate = RNA(n+1) + diphosphate. Functionally, RNA-dependent RNA polymerase which replicates the viral genome. Catalyzes the transcription of fully conservative plus-strand genomic RNAs that are extruded from the virion into the cytoplasm where they function as mRNAs for translation of viral proteins and also as substrates for encapsidation to form new virions. Once encapsidated, the positive strand is converted to dsRNA by the RNA-directed RNA polymerase. The polypeptide is Probable RNA-directed RNA polymerase (gag-pol) (Saccharomyces cerevisiae virus L-BC (ScV-L-BC)).